A 361-amino-acid chain; its full sequence is Salt tolerance receptor-like cytoplasmic kinase 1 (361 aa).

3 S-palmitoyl cysteine lipidation sites follow: Cys5, Cys10, and Cys14. Residues 67–347 (GFSSRVIGHG…RALQEKTSAL (281 aa)) enclose the Protein kinase domain. ATP contacts are provided by residues 73–81 (IGHGGFSTV) and Lys95. Asp195 serves as the catalytic Proton acceptor.

The protein belongs to the protein kinase superfamily. Ser/Thr protein kinase family. In terms of assembly, self-interacts. Interacts with CATA, CATB and CATC at the plasma membrane. In terms of processing, palmitoylated. Palmotylation at Cys-5, Cys-10 and Cys-14 by DHHC9 is required for plasma membrane targeting and STRK1 function. Post-translationally, autophosphorylated. In terms of tissue distribution, accumulates in seeds. Mainly expressed in young roots, and, to a lower extent, in leaf veins, seedlings, stems, leaf sheath and young spikelet.

The protein resides in the cell membrane. The enzyme catalyses L-seryl-[protein] + ATP = O-phospho-L-seryl-[protein] + ADP + H(+). It carries out the reaction L-threonyl-[protein] + ATP = O-phospho-L-threonyl-[protein] + ADP + H(+). It catalyses the reaction L-tyrosyl-[protein] + ATP = O-phospho-L-tyrosyl-[protein] + ADP + H(+). In terms of biological role, acts probably as a dual specificity protein kinase. Regulates hydrogen peroxide (H(2)O(2)) homeostasis and improves salt tolerance by phosphorylating tyrosine residues of CATC thus activating its catalase activity. Promotes growth at the seedling stage and prevents grain yield loss under salt stress conditions. This Oryza sativa subsp. japonica (Rice) protein is Salt tolerance receptor-like cytoplasmic kinase 1.